The primary structure comprises 53 residues: uncharacterized protein (53 aa).

The next 2 membrane-spanning stretches (helical) occupy residues Leu-3–Leu-22 and Ala-26–Leu-45.

Its subcellular location is the cell membrane. This is an uncharacterized protein from Bacillus subtilis (strain 168).